Consider the following 78-residue polypeptide: Large ribosomal subunit protein bL28 (78 aa).

Residues 1 to 20 (MSRVCQVTGKGPVTGNNISH) are disordered.

This sequence belongs to the bacterial ribosomal protein bL28 family.

This Pseudomonas putida (strain ATCC 700007 / DSM 6899 / JCM 31910 / BCRC 17059 / LMG 24140 / F1) protein is Large ribosomal subunit protein bL28.